Consider the following 222-residue polypeptide: Probable transcriptional regulator ycf29 (222 aa).

In terms of domain architecture, Response regulatory spans Lys-4 to Ile-120. 4-aspartylphosphate is present on Asp-53. Residues Gln-139–Asn-204 enclose the HTH luxR-type domain. The H-T-H motif DNA-binding region spans Asn-163–Ser-182.

The protein resides in the plastid. It localises to the chloroplast. This Pyropia yezoensis (Susabi-nori) protein is Probable transcriptional regulator ycf29 (ycf29).